The primary structure comprises 229 residues: Uracil-DNA glycosylase (229 aa).

Asp-64 (proton acceptor) is an active-site residue.

The protein belongs to the uracil-DNA glycosylase (UDG) superfamily. UNG family.

The protein localises to the cytoplasm. The enzyme catalyses Hydrolyzes single-stranded DNA or mismatched double-stranded DNA and polynucleotides, releasing free uracil.. In terms of biological role, excises uracil residues from the DNA which can arise as a result of misincorporation of dUMP residues by DNA polymerase or due to deamination of cytosine. This chain is Uracil-DNA glycosylase, found in Escherichia coli (strain 55989 / EAEC).